A 132-amino-acid polypeptide reads, in one-letter code: Gonadotropin subunit beta-1 (132 aa).

The N-terminal stretch at 1 to 17 (MMRGVTMVLLLPMLVWA) is a signal peptide. Cystine bridges form between Cys25–Cys73, Cys39–Cys88, Cys50–Cys104, Cys54–Cys106, and Cys109–Cys116. N-linked (GlcNAc...) asparagine glycans are attached at residues Asn29 and Asn46.

The protein belongs to the glycoprotein hormones subunit beta family. In terms of assembly, heterodimer of an alpha and a beta chain.

It localises to the secreted. Involved in gametogenesis and steroidogenesis. The protein is Gonadotropin subunit beta-1 (cgba) of Ictalurus punctatus (Channel catfish).